The primary structure comprises 323 residues: UDP-N-acetylenolpyruvoylglucosamine reductase (323 aa).

The FAD-binding PCMH-type domain maps to 52 to 217 (KSGGAADWLF…VSARLQGEPG (166 aa)). Arginine 197 is a catalytic residue. A disordered region spans residues 234 to 253 (EQSQPVRTKTGGSTFKNPPG). Over residues 235-249 (QSQPVRTKTGGSTFK) the composition is skewed to polar residues. The active-site Proton donor is the serine 246. Glutamate 316 is an active-site residue.

The protein belongs to the MurB family. The cofactor is FAD.

The protein resides in the cytoplasm. The catalysed reaction is UDP-N-acetyl-alpha-D-muramate + NADP(+) = UDP-N-acetyl-3-O-(1-carboxyvinyl)-alpha-D-glucosamine + NADPH + H(+). The protein operates within cell wall biogenesis; peptidoglycan biosynthesis. Cell wall formation. The chain is UDP-N-acetylenolpyruvoylglucosamine reductase from Erythrobacter litoralis (strain HTCC2594).